Consider the following 318-residue polypeptide: 4-diphosphocytidyl-2-C-methyl-D-erythritol kinase (318 aa).

Lys13 is a catalytic residue. 101-111 (PVAGGMAGGSA) serves as a coordination point for ATP. Asp143 is an active-site residue. The tract at residues 298–318 (PGARLVTDDRADRPTPPQVHA) is disordered.

Belongs to the GHMP kinase family. IspE subfamily.

It catalyses the reaction 4-CDP-2-C-methyl-D-erythritol + ATP = 4-CDP-2-C-methyl-D-erythritol 2-phosphate + ADP + H(+). It participates in isoprenoid biosynthesis; isopentenyl diphosphate biosynthesis via DXP pathway; isopentenyl diphosphate from 1-deoxy-D-xylulose 5-phosphate: step 3/6. Functionally, catalyzes the phosphorylation of the position 2 hydroxy group of 4-diphosphocytidyl-2C-methyl-D-erythritol. This Saccharopolyspora erythraea (strain ATCC 11635 / DSM 40517 / JCM 4748 / NBRC 13426 / NCIMB 8594 / NRRL 2338) protein is 4-diphosphocytidyl-2-C-methyl-D-erythritol kinase.